The primary structure comprises 308 residues: UDP-N-acetylenolpyruvoylglucosamine reductase (308 aa).

Residues 32–197 enclose the FAD-binding PCMH-type domain; it reads QTGGKADYYL…LEAAFTLAPG (166 aa). R176 is an active-site residue. Residue S226 is the Proton donor of the active site. E296 is a catalytic residue.

The protein belongs to the MurB family. Requires FAD as cofactor.

It localises to the cytoplasm. It carries out the reaction UDP-N-acetyl-alpha-D-muramate + NADP(+) = UDP-N-acetyl-3-O-(1-carboxyvinyl)-alpha-D-glucosamine + NADPH + H(+). The protein operates within cell wall biogenesis; peptidoglycan biosynthesis. Functionally, cell wall formation. This is UDP-N-acetylenolpyruvoylglucosamine reductase from Staphylococcus saprophyticus subsp. saprophyticus (strain ATCC 15305 / DSM 20229 / NCIMB 8711 / NCTC 7292 / S-41).